The sequence spans 95 residues: Protein TusB (95 aa).

This sequence belongs to the DsrH/TusB family. As to quaternary structure, heterohexamer, formed by a dimer of trimers. The hexameric TusBCD complex contains 2 copies each of TusB, TusC and TusD. The TusBCD complex interacts with TusE.

Its subcellular location is the cytoplasm. Functionally, part of a sulfur-relay system required for 2-thiolation of 5-methylaminomethyl-2-thiouridine (mnm(5)s(2)U) at tRNA wobble positions. This is Protein TusB from Erwinia tasmaniensis (strain DSM 17950 / CFBP 7177 / CIP 109463 / NCPPB 4357 / Et1/99).